Here is a 226-residue protein sequence, read N- to C-terminus: ATP synthase F(0) complex subunit a (226 aa).

The next 6 helical transmembrane spans lie at 12–32 (PTMM…ILFP), 68–88 (WALM…LGLL), 97–117 (QLSM…ITGF), 138–158 (IPML…ALAV), 164–184 (ITAG…LMDI), and 189–209 (AFIT…VALI).

The protein belongs to the ATPase A chain family. In terms of assembly, component of the ATP synthase complex composed at least of ATP5F1A/subunit alpha, ATP5F1B/subunit beta, ATP5MC1/subunit c (homooctomer), MT-ATP6/subunit a, MT-ATP8/subunit 8, ATP5ME/subunit e, ATP5MF/subunit f, ATP5MG/subunit g, ATP5MK/subunit k, ATP5MJ/subunit j, ATP5F1C/subunit gamma, ATP5F1D/subunit delta, ATP5F1E/subunit epsilon, ATP5PF/subunit F6, ATP5PB/subunit b, ATP5PD/subunit d, ATP5PO/subunit OSCP. ATP synthase complex consists of a soluble F(1) head domain (subunits alpha(3) and beta(3)) - the catalytic core - and a membrane F(0) domain - the membrane proton channel (subunits c, a, 8, e, f, g, k and j). These two domains are linked by a central stalk (subunits gamma, delta, and epsilon) rotating inside the F1 region and a stationary peripheral stalk (subunits F6, b, d, and OSCP). Interacts with DNAJC30; interaction is direct.

The protein resides in the mitochondrion inner membrane. The enzyme catalyses H(+)(in) = H(+)(out). Its function is as follows. Subunit a, of the mitochondrial membrane ATP synthase complex (F(1)F(0) ATP synthase or Complex V) that produces ATP from ADP in the presence of a proton gradient across the membrane which is generated by electron transport complexes of the respiratory chain. ATP synthase complex consist of a soluble F(1) head domain - the catalytic core - and a membrane F(1) domain - the membrane proton channel. These two domains are linked by a central stalk rotating inside the F(1) region and a stationary peripheral stalk. During catalysis, ATP synthesis in the catalytic domain of F(1) is coupled via a rotary mechanism of the central stalk subunits to proton translocation. With the subunit c (ATP5MC1), forms the proton-conducting channel in the F(0) domain, that contains two crucial half-channels (inlet and outlet) that facilitate proton movement from the mitochondrial intermembrane space (IMS) into the matrix. Protons are taken up via the inlet half-channel and released through the outlet half-channel, following a Grotthuss mechanism. This Phoca vitulina (Harbor seal) protein is ATP synthase F(0) complex subunit a.